We begin with the raw amino-acid sequence, 473 residues long: ATP synthase subunit beta (473 aa).

153–160 is an ATP binding site; it reads GGAGVGKT.

Belongs to the ATPase alpha/beta chains family. F-type ATPases have 2 components, CF(1) - the catalytic core - and CF(0) - the membrane proton channel. CF(1) has five subunits: alpha(3), beta(3), gamma(1), delta(1), epsilon(1). CF(0) has three main subunits: a(1), b(2) and c(9-12). The alpha and beta chains form an alternating ring which encloses part of the gamma chain. CF(1) is attached to CF(0) by a central stalk formed by the gamma and epsilon chains, while a peripheral stalk is formed by the delta and b chains.

It is found in the cell inner membrane. The enzyme catalyses ATP + H2O + 4 H(+)(in) = ADP + phosphate + 5 H(+)(out). Produces ATP from ADP in the presence of a proton gradient across the membrane. The catalytic sites are hosted primarily by the beta subunits. The sequence is that of ATP synthase subunit beta from Rickettsia conorii (strain ATCC VR-613 / Malish 7).